A 756-amino-acid polypeptide reads, in one-letter code: Catalase-peroxidase (756 aa).

The segment at residues W91 to Y244 is a cross-link (tryptophyl-tyrosyl-methioninium (Trp-Tyr) (with M-270)). Residue H92 is the Proton acceptor of the active site. The segment at A198 to N230 is disordered. Over residues P214–R223 the composition is skewed to basic and acidic residues. Residues Y244–M270 constitute a cross-link (tryptophyl-tyrosyl-methioninium (Tyr-Met) (with W-91)). H285 contacts heme b. The tract at residues K371 to A390 is disordered.

The protein belongs to the peroxidase family. Peroxidase/catalase subfamily. Homodimer or homotetramer. The cofactor is heme b. In terms of processing, formation of the three residue Trp-Tyr-Met cross-link is important for the catalase, but not the peroxidase activity of the enzyme.

It carries out the reaction H2O2 + AH2 = A + 2 H2O. The enzyme catalyses 2 H2O2 = O2 + 2 H2O. Functionally, bifunctional enzyme with both catalase and broad-spectrum peroxidase activity. The chain is Catalase-peroxidase from Pseudomonas syringae pv. tomato (strain ATCC BAA-871 / DC3000).